The chain runs to 287 residues: RNA polymerase sigma factor RpoH (287 aa).

The interval 54 to 123 (LILSHLRFVI…IHEYVLRNWR (70 aa)) is sigma-70 factor domain-2. The Interaction with polymerase core subunit RpoC motif lies at 78-81 (DLIQ). The tract at residues 230–283 (ALSSLDERSRNIIHARWLDDSDHKMTLREIAHNYGISAERVRQLEKNAMKKLKV) is sigma-70 factor domain-4. Residues 256 to 275 (LREIAHNYGISAERVRQLEK) constitute a DNA-binding region (H-T-H motif).

It belongs to the sigma-70 factor family. RpoH subfamily. As to quaternary structure, interacts with the RNA polymerase core enzyme.

It localises to the cytoplasm. In terms of biological role, sigma factors are initiation factors that promote the attachment of RNA polymerase to specific initiation sites and are then released. This sigma factor is involved in regulation of expression of heat shock genes. The polypeptide is RNA polymerase sigma factor RpoH (Buchnera aphidicola subsp. Baizongia pistaciae (strain Bp)).